Here is a 95-residue protein sequence, read N- to C-terminus: Heteroscorpine-1 (95 aa).

The signal sequence occupies residues 1 to 19 (MNSKLTALIFLGLVAIASC). The 41-residue stretch at 55–95 (EFQCVANIDTMGNCETHCQKTSGEKGFCHGTKCKCGKPLSY) folds into the BetaSPN-type CS-alpha/beta domain. 3 disulfides stabilise this stretch: C58–C82, C68–C87, and C72–C89.

It belongs to the long chain scorpion toxin family. Class 3 subfamily. In terms of processing, contains 3 disulfide bonds. As to expression, expressed by the venom gland.

Its subcellular location is the secreted. Its function is as follows. Has antibacterial activity against B.subtilis, K.pneumoniae and P.aeruginosa. This chain is Heteroscorpine-1, found in Heterometrus laoticus (Thai giant scorpion).